The sequence spans 124 residues: Small ribosomal subunit protein uS12 (124 aa).

Residues 1 to 29 are disordered; the sequence is MATINQLVRKGRKRRVAKSNVPALEASPQ. A 3-methylthioaspartic acid modification is found at Asp89. Residues 101-124 are disordered; that stretch reads AADTAGVDKRRQGRSKYGAKRPKS. Residues 111–124 are compositionally biased toward basic residues; it reads RQGRSKYGAKRPKS.

The protein belongs to the universal ribosomal protein uS12 family. Part of the 30S ribosomal subunit. Contacts proteins S8 and S17. May interact with IF1 in the 30S initiation complex.

Functionally, with S4 and S5 plays an important role in translational accuracy. In terms of biological role, interacts with and stabilizes bases of the 16S rRNA that are involved in tRNA selection in the A site and with the mRNA backbone. Located at the interface of the 30S and 50S subunits, it traverses the body of the 30S subunit contacting proteins on the other side and probably holding the rRNA structure together. The combined cluster of proteins S8, S12 and S17 appears to hold together the shoulder and platform of the 30S subunit. In Alkalilimnicola ehrlichii (strain ATCC BAA-1101 / DSM 17681 / MLHE-1), this protein is Small ribosomal subunit protein uS12.